A 248-amino-acid polypeptide reads, in one-letter code: Adenosylcobinamide-GDP ribazoletransferase (248 aa).

6 helical membrane passes run F36–L56, F59–G79, F113–V133, C137–L157, I170–M190, and I199–L219.

This sequence belongs to the CobS family. Mg(2+) is required as a cofactor.

The protein resides in the cell membrane. It catalyses the reaction alpha-ribazole + adenosylcob(III)inamide-GDP = adenosylcob(III)alamin + GMP + H(+). The enzyme catalyses alpha-ribazole 5'-phosphate + adenosylcob(III)inamide-GDP = adenosylcob(III)alamin 5'-phosphate + GMP + H(+). Its pathway is cofactor biosynthesis; adenosylcobalamin biosynthesis; adenosylcobalamin from cob(II)yrinate a,c-diamide: step 7/7. Functionally, joins adenosylcobinamide-GDP and alpha-ribazole to generate adenosylcobalamin (Ado-cobalamin). Also synthesizes adenosylcobalamin 5'-phosphate from adenosylcobinamide-GDP and alpha-ribazole 5'-phosphate. The polypeptide is Adenosylcobinamide-GDP ribazoletransferase (Clostridium botulinum (strain 657 / Type Ba4)).